Here is a 732-residue protein sequence, read N- to C-terminus: Catalase-peroxidase (732 aa).

Residues 1 to 15 form the signal peptide; it reads MSTESKCPFAGGAYA. Positions 96–219 form a cross-link, tryptophyl-tyrosyl-methioninium (Trp-Tyr) (with M-245); sequence WHSAGTYRIY…LGAVQMGLIY (124 aa). His-97 acts as the Proton acceptor in catalysis. A cross-link (tryptophyl-tyrosyl-methioninium (Tyr-Met) (with W-96)) is located at residues 219-245; that stretch reads YVNPEGPNGNPDPLASARDIRETFARM. His-260 is a heme b binding site.

The protein belongs to the peroxidase family. Peroxidase/catalase subfamily. Homodimer or homotetramer. Heme b serves as cofactor. Formation of the three residue Trp-Tyr-Met cross-link is important for the catalase, but not the peroxidase activity of the enzyme.

The enzyme catalyses H2O2 + AH2 = A + 2 H2O. It carries out the reaction 2 H2O2 = O2 + 2 H2O. Functionally, bifunctional enzyme with both catalase and broad-spectrum peroxidase activity. In Acidobacterium capsulatum (strain ATCC 51196 / DSM 11244 / BCRC 80197 / JCM 7670 / NBRC 15755 / NCIMB 13165 / 161), this protein is Catalase-peroxidase.